Consider the following 355-residue polypeptide: Magnesium-chelatase subunit ChlI (355 aa).

47–54 (GDRGTGKS) contacts ATP.

Belongs to the Mg-chelatase subunits D/I family.

Its subcellular location is the plastid. The protein localises to the chloroplast. The catalysed reaction is protoporphyrin IX + Mg(2+) + ATP + H2O = Mg-protoporphyrin IX + ADP + phosphate + 3 H(+). The protein operates within porphyrin-containing compound metabolism; chlorophyll biosynthesis. Its function is as follows. Involved in chlorophyll biosynthesis; introduces a magnesium ion into protoporphyrin IX to yield Mg-protoporphyrin IX. In Pyropia yezoensis (Susabi-nori), this protein is Magnesium-chelatase subunit ChlI (chlI).